The sequence spans 228 residues: Ribose-5-phosphate isomerase A (228 aa).

Residues 29–32 (TGST), 85–88 (DGAD), and 98–101 (KGGG) contribute to the substrate site. Catalysis depends on Glu107, which acts as the Proton acceptor. Position 125 (Lys125) interacts with substrate.

The protein belongs to the ribose 5-phosphate isomerase family. In terms of assembly, homodimer.

It carries out the reaction aldehydo-D-ribose 5-phosphate = D-ribulose 5-phosphate. It functions in the pathway carbohydrate degradation; pentose phosphate pathway; D-ribose 5-phosphate from D-ribulose 5-phosphate (non-oxidative stage): step 1/1. Functionally, catalyzes the reversible conversion of ribose-5-phosphate to ribulose 5-phosphate. The chain is Ribose-5-phosphate isomerase A from Staphylococcus aureus (strain COL).